The chain runs to 381 residues: Actin-binding Rho-activating protein (381 aa).

Disordered regions lie at residues 39–156 (ENSI…SHGS) and 179–207 (QEEP…PEQD). The segment covering 69–79 (PTSHQKAQSAP) has biased composition (polar residues). Residues 97 to 110 (KAPEVSHIKKKEVS) are compositionally biased toward basic and acidic residues. A phosphoserine mark is found at Ser-156 and Ser-188. The span at 179 to 188 (QEEPTWRSDS) shows a compositional bias: basic and acidic residues. 2 actin-binding regions span residues 199 to 299 (EAEE…AERA) and 300 to 381 (KRAE…TLLK). Interaction with actin regions lie at residues 240–285 (SPVG…GDEG) and 352–381 (MRAR…TLLK).

In terms of assembly, binds F-actin and ABLIM1, ABLIM2 and ABLIM3. Interaction with ABLIM2 and ABLIM3 enhances activity.

The protein localises to the cytoplasm. The protein resides in the myofibril. It is found in the sarcomere. Its subcellular location is the cytoskeleton. Its function is as follows. Acts as an activator of serum response factor (SRF)-dependent transcription possibly by inducing nuclear translocation of MKL1 or MKL2 and through a mechanism requiring Rho-actin signaling. This chain is Actin-binding Rho-activating protein, found in Homo sapiens (Human).